Here is a 249-residue protein sequence, read N- to C-terminus: ATP synthase subunit a (249 aa).

The next 6 helical transmembrane spans lie at 30-50, 86-106, 115-135, 146-166, 191-211, and 218-238; these read QSPLFMLIAAAVVLVFLYVGM, FFPFVFAIFFFILAGNYLGLL, HIAVTFGLAIMVFIISILASI, FLPAGTPVWLAPLLVPIEIIS, VFAGFTIMLAGLGAFGHVLAI, and IALTALELLVGVLQAYVFAIL.

This sequence belongs to the ATPase A chain family. As to quaternary structure, F-type ATPases have 2 components, CF(1) - the catalytic core - and CF(0) - the membrane proton channel. CF(1) has five subunits: alpha(3), beta(3), gamma(1), delta(1), epsilon(1). CF(0) has three main subunits: a(1), b(2) and c(9-12). The alpha and beta chains form an alternating ring which encloses part of the gamma chain. CF(1) is attached to CF(0) by a central stalk formed by the gamma and epsilon chains, while a peripheral stalk is formed by the delta and b chains.

It localises to the cell inner membrane. Its function is as follows. Key component of the proton channel; it plays a direct role in the translocation of protons across the membrane. This is ATP synthase subunit a from Gluconobacter oxydans (strain 621H) (Gluconobacter suboxydans).